Reading from the N-terminus, the 258-residue chain is Ribosomal RNA small subunit methyltransferase A (258 aa).

S-adenosyl-L-methionine is bound by residues histidine 13, leucine 15, glycine 40, glutamate 61, aspartate 86, and asparagine 106.

This sequence belongs to the class I-like SAM-binding methyltransferase superfamily. rRNA adenine N(6)-methyltransferase family. RsmA subfamily.

The protein resides in the cytoplasm. It carries out the reaction adenosine(1518)/adenosine(1519) in 16S rRNA + 4 S-adenosyl-L-methionine = N(6)-dimethyladenosine(1518)/N(6)-dimethyladenosine(1519) in 16S rRNA + 4 S-adenosyl-L-homocysteine + 4 H(+). Functionally, specifically dimethylates two adjacent adenosines (A1518 and A1519) in the loop of a conserved hairpin near the 3'-end of 16S rRNA in the 30S particle. May play a critical role in biogenesis of 30S subunits. This Coxiella burnetii (strain Dugway 5J108-111) protein is Ribosomal RNA small subunit methyltransferase A.